A 428-amino-acid polypeptide reads, in one-letter code: Enolase (428 aa).

Gln163 contacts (2R)-2-phosphoglycerate. The Proton donor role is filled by Glu205. Residues Asp242, Glu285, and Asp312 each contribute to the Mg(2+) site. Residues Lys337, Arg366, Ser367, and Lys388 each coordinate (2R)-2-phosphoglycerate. Lys337 functions as the Proton acceptor in the catalytic mechanism.

It belongs to the enolase family. The cofactor is Mg(2+).

It is found in the cytoplasm. Its subcellular location is the secreted. The protein localises to the cell surface. It catalyses the reaction (2R)-2-phosphoglycerate = phosphoenolpyruvate + H2O. It functions in the pathway carbohydrate degradation; glycolysis; pyruvate from D-glyceraldehyde 3-phosphate: step 4/5. Functionally, catalyzes the reversible conversion of 2-phosphoglycerate (2-PG) into phosphoenolpyruvate (PEP). It is essential for the degradation of carbohydrates via glycolysis. The protein is Enolase of Neisseria meningitidis serogroup C (strain 053442).